A 156-amino-acid polypeptide reads, in one-letter code: Zinc metalloproteinase-disintegrin jararin (156 aa).

The region spanning 1-67 (FVANRMAHEL…NYYGCLLNEP (67 aa)) is the Peptidase M12B domain. Position 8 (histidine 8) interacts with Zn(2+). Residue glutamate 9 is part of the active site. Residue histidine 12 participates in Zn(2+) binding. 9 cysteine pairs are disulfide-bonded: cysteine 23–cysteine 47, cysteine 25–cysteine 30, cysteine 78–cysteine 97, cysteine 89–cysteine 107, cysteine 91–cysteine 102, cysteine 101–cysteine 124, cysteine 115–cysteine 121, cysteine 120–cysteine 145, and cysteine 133–cysteine 152. The Disintegrin domain maps to 75–156 (PPFCGNYYPE…GQSGDCPRNS (82 aa)). Residues 136-145 (GRGDNPDDRC) are compositionally biased toward basic and acidic residues. The disordered stretch occupies residues 136–156 (GRGDNPDDRCTGQSGDCPRNS). A Cell attachment site motif is present at residues 137-139 (RGD). Positions 146 to 156 (TGQSGDCPRNS) are enriched in polar residues.

It belongs to the venom metalloproteinase (M12B) family. P-II subfamily. P-IIb sub-subfamily. As to quaternary structure, monomer. Zn(2+) serves as cofactor. In terms of tissue distribution, expressed by the venom gland.

The protein resides in the secreted. Snake venom zinc metalloproteinase that inhibits ADP-induced platelet aggregation (probably by binding integrin alpha-IIb/beta-3 (ITGA2B/ITGB3)) and degrades fibrinogen. In Bothrops jararaca (Jararaca), this protein is Zinc metalloproteinase-disintegrin jararin.